The following is a 1905-amino-acid chain: Transport and Golgi organization protein 1 homolog (1905 aa).

An N-terminal signal peptide occupies residues 1-22 (MAAAQGLLFWLLLLGPPCRVPG). At 23-1141 (QPEQDPGRRF…EPASVTPLEN (1119 aa)) the chain is on the lumenal side. Residues 45–107 (MLMYRGEALE…PKDLIQVVHE (63 aa)) enclose the SH3 domain. Over residues 154 to 167 (SEKVKEKTAQRVEE) the composition is skewed to basic and acidic residues. Disordered regions lie at residues 154 to 259 (SEKV…HEQE) and 313 to 621 (TVGK…IKDR). A glycan (N-linked (GlcNAc...) asparagine) is linked at Asn-173. The segment covering 173–190 (NESDAEPEPGEPNSEESE) has biased composition (acidic residues). Residues 198–208 (AELRERSEAQK) are compositionally biased toward basic and acidic residues. The segment covering 209–220 (SHPQVNSQTGHA) has biased composition (polar residues). A phosphoserine mark is found at Ser-226 and Ser-229. The span at 234-245 (LQDKLKVPDSEN) shows a compositional bias: basic and acidic residues. The N-linked (GlcNAc...) asparagine glycan is linked to Asn-246. Residues 246-255 (NKTSNSSQVS) show a composition bias toward polar residues. Over residues 317-327 (EEEENKEDFDE) the composition is skewed to acidic residues. Basic and acidic residues-rich tracts occupy residues 337–366 (EDTK…KVEE) and 373–386 (KKGD…REDT). Residues 392-414 (MEGEENTDTDLESSDSKEEDDPL) are compositionally biased toward acidic residues. Composition is skewed to basic and acidic residues over residues 419–436 (RLGK…KAAD) and 459–480 (HMKD…HEVG). The stretch at 467-527 (VEEPRRDWVQ…ANQENDLKGA (61 aa)) forms a coiled coil. The span at 488–500 (DQAVQGSSQSGHL) shows a compositional bias: polar residues. Over residues 531–542 (ISKEMLHEEKPS) the composition is skewed to basic and acidic residues. A glycan (N-linked (GlcNAc...) asparagine) is linked at Asn-627. 3 disordered regions span residues 657 to 908 (QQGG…PHAP), 1036 to 1059 (APPA…QPPL), and 1085 to 1118 (PVTR…TPVD). Basic and acidic residues predominate over residues 669-714 (VSEKRELPEEEVTRVTKDASDEGQEVRKTGQTDSIEGRGFRPKEPN). Over residues 715–730 (PEDEDYSPEELLEDEN) the composition is skewed to acidic residues. Basic and acidic residues-rich tracts occupy residues 736–751 (QSKE…RLDV), 766–789 (TDPE…KNET), 842–859 (SQKK…EGHP), and 868–884 (PGVE…EKFV). At Ser-873 the chain carries Phosphoserine. The stretch at 1142 to 1162 (AIAFIYSLVFHLTKTLLATLP) is an intramembrane region. Topologically, residues 1163–1173 (DDVQPGPDFYG) are lumenal. The helical transmembrane segment at 1174 to 1194 (LPWKPVLITASLGIVSFAVFF) threads the bilayer. Over 1195–1905 (WRTVLAVKSR…DCSPALKQSP (711 aa)) the chain is Cytoplasmic. Positions 1208-1647 (VTEQQISEKL…VIVKPMPGRP (440 aa)) are mediates interaction with MIA2. Residues 1211-1393 (QQISEKLKNI…SQKDLEVALT (183 aa)) are a coiled coil. The disordered stretch occupies residues 1416–1443 (SESEDQNKGGSESDELANGEVGGDRSEK). Phosphoserine is present on Ser-1428. A coiled-coil region spans residues 1484–1636 (NLEDQIKKLE…TQKMAMMQEE (153 aa)). The segment at 1639 to 1905 (IVKPMPGRPN…DCSPALKQSP (267 aa)) is disordered. Over residues 1647-1664 (PNTQNPPRRGPLSQNGSF) the composition is skewed to polar residues. A phosphoserine mark is found at Ser-1663, Ser-1675, Ser-1703, Ser-1724, Ser-1738, and Ser-1742. Residues 1748-1905 (DEGKVSMAAK…DCSPALKQSP (158 aa)) form a proline-rich domain (PRD); mediates interaction with the COPII coat subunits SEC23A and SEC23B region. The segment covering 1776 to 1806 (LLPPIRYGPPPQLCGPFGPRPLPPPFGPGMR) has biased composition (pro residues). Asymmetric dimethylarginine is present on Arg-1781. The SEC16A-interacting region (SIR); required for its localization to endoplasmic reticulum exit sites and for its interaction with SEC16A stretch occupies residues 1785–1845 (PPQLCGPFGP…GHAPFRPLGS (61 aa)). Positions 1821 to 1831 (GKRDLPLDPRE) are enriched in basic and acidic residues. A phosphoserine mark is found at Ser-1890 and Ser-1904. Positions 1891–1905 (QGASQDCSPALKQSP) are enriched in polar residues.

Belongs to the MIA/OTOR family. Tango1 subfamily. As to quaternary structure, interacts with MIA2. Interacts (via SH3 domain) with COL7A1. Interacts with the COPII coat subunits SEC23A, SEC23B and maybe SEC24C. May interact with APOB and MIA2. Interacts with SEC16A.

It is found in the endoplasmic reticulum membrane. Plays a role in the transport of cargos that are too large to fit into COPII-coated vesicles and require specific mechanisms to be incorporated into membrane-bound carriers and exported from the endoplasmic reticulum. This protein is required for collagen VII (COL7A1) secretion by loading COL7A1 into transport carriers. It may participate in cargo loading of COL7A1 at endoplasmic reticulum exit sites by binding to COPII coat subunits Sec23/24 and guiding SH3-bound COL7A1 into a growing carrier. Does not play a role in global protein secretion and is apparently specific to COL7A1 cargo loading. However, it may participate in secretion of other proteins in cells that do not secrete COL7A1. It is also specifically required for the secretion of lipoproteins by participating in their export from the endoplasmic reticulum. Required for correct assembly of COPII coat components at endoplasmic reticulum exit sites (ERES) and for the localization of SEC16A and membrane-bound ER-resident complexes consisting of MIA2 and PREB/SEC12 to ERES. This is Transport and Golgi organization protein 1 homolog from Bos taurus (Bovine).